Reading from the N-terminus, the 1308-residue chain is Limbin (1308 aa).

The signal sequence occupies residues 1–26 (MDPSGSRGRPTWVLAGGLLAVALALG). Topologically, residues 27-300 (GRGCLGASSR…VLPHHGLHAA (274 aa)) are extracellular. The interval 36–76 (RPRWRPLGAQPPRDPQVAPRSGPGLRIPPGRSGAGPESSTQ) is disordered. N-linked (GlcNAc...) asparagine glycosylation is present at Asn220. A helical transmembrane segment spans residues 301 to 321 (GFFIAFLLSLVLTWAALFLMV). Topologically, residues 322 to 1308 (RYQCLKGNML…KKAMRALGMD (987 aa)) are cytoplasmic. Coiled-coil stretches lie at residues 455–578 (TAEC…ELMD), 636–800 (DQME…DRDQ), and 1001–1113 (ASEM…EADT). Positions 784–801 (MAARAEQLEGEERDRDQE) are enriched in basic and acidic residues. The tract at residues 784–816 (MAARAEQLEGEERDRDQEGVQSVRQRLKDDAPE) is disordered.

In terms of assembly, component of the EvC complex composed of EFCAB7, IQCE, EVC2 and EVC; built from two subcomplexes, EVC2:EVC and EFCAB7:IQCE. Interacts with EVC. Interacts (via N-terminal end) with EFCAB7. Interacts (via N-terminal end) with IQCE. Found in the heart, placenta, lung, liver, skeletal muscle, kidney and pancreas.

Its subcellular location is the cell membrane. It is found in the cytoplasm. The protein localises to the cytoskeleton. The protein resides in the cilium basal body. It localises to the cell projection. Its subcellular location is the cilium. It is found in the cilium membrane. The protein localises to the nucleus. Its function is as follows. Component of the EvC complex that positively regulates ciliary Hedgehog (Hh) signaling. Plays a critical role in bone formation and skeletal development. May be involved in early embryonic morphogenesis. The polypeptide is Limbin (EVC2) (Homo sapiens (Human)).